A 263-amino-acid polypeptide reads, in one-letter code: Mannose-specific lectin 2 (263 aa).

An N-terminal signal peptide occupies residues 1 to 24 (MAKSLVLSSLLLALLLAAPLASLA). Bulb-type lectin domains follow at residues 26 to 136 (NNVL…APNR) and 150 to 260 (RNVL…SSAS). 2 cysteine pairs are disulfide-bonded: C54-C76 and C178-C203.

As to quaternary structure, heterotetramer of 2 domain 1 and 2 domain 2 chains arranged as a dimer of domain 1/domain 2 heterodimers.

In terms of biological role, mannose-specific lectin. Has weak agglutinating activity towards trypsin-treated erythrocytes from rabbit but not from human. The sequence is that of Mannose-specific lectin 2 from Crocus vernus (Dutch crocus).